The chain runs to 964 residues: DNA mismatch repair protein MSH2 (964 aa).

688–695 (GPNMGGKS) provides a ligand contact to ATP. The interval 851-964 (DQSFGIHVAE…YLKYIKALLL (114 aa)) is interaction with MSH6.

This sequence belongs to the DNA mismatch repair MutS family. Heterodimer consisting of MSH2-MSH6 (MutS alpha) or MSH2-MSH3 (MutS beta). Both heterodimers form a ternary complex with MutL alpha (MLH1-PMS1). MutS beta also forms a ternary complex with MutL beta (MLH1-MLH3), and possibly with a MLH1-MLH2 heterodimer. Both heterodimers interact with proliferating cell nuclear antigen (PCNA/POL30). This interaction is disrupted upon binding of the MutS heterodimers to mismatch DNA. Interacts with SAW1.

It is found in the nucleus. Its activity is regulated as follows. Inhibited by Cd(2+). In terms of biological role, component of the post-replicative DNA mismatch repair system (MMR). Forms two different heterodimers: MutS alpha (MSH2-MSH6 heterodimer) and MutS beta (MSH2-MSH3 heterodimer), which bind to DNA mismatches thereby initiating DNA repair. MSH2 seems to act as a scaffold for the other MutS homologs that provide substrate-binding and substrate specificity. When bound, heterodimers bend the DNA helix and shield approximately 20 base pairs. MutS alpha acts mainly to repair base-base and single insertion-deletion mismatches that occur during replication, but can also repair longer insertion-deletion loops (IDLs), although with decreasing efficiency as the size of the extrahelical loop increases. MutS beta acts mainly to repair IDLs from 2 to 13 nucleotides in size, but can also repair base-base and single insertion-deletion mismatches. After mismatch binding, MutS alpha or beta form a ternary complex with a MutL heterodimer, which is thought to be responsible for directing the downstream MMR events, including strand discrimination, excision, and resynthesis. ATP binding and hydrolysis play a pivotal role in mismatch repair functions. Both subunits bind ATP, but with differing affinities, and their ATPase kinetics are also very different. MSH6 binds and hydrolyzes ATP rapidly, whereas MSH2 catalyzes ATP at a substantially slower rate. Binding to a mismatched base pair suppresses MSH6-catalyzed ATP hydrolysis, but not the activity of MSH2. ATP binding to both subunits is necessary to trigger a change in MutS alpha interaction with mismatched DNA, converting MutS alpha into a sliding clamp capable of hydrolysis-independent movement along DNA, and also facilitates formation of ternary complexes containing MutS and MutL proteins and the mismatch. MutS beta also has a role in regulation of heteroduplex formation during mitotic and meiotic recombination. MutS beta binds to DNA flap structures predicted to form during recombination, and is required for 3' non-homologous tail removal (NHTR). MutS beta-binding alters the DNA conformation of its substrate at the ds/ssDNA junction and may facilitate its recognition and/or cleavage by the downstream nucleotide excision repair (NER) RAD1-RAD10 endonuclease. This chain is DNA mismatch repair protein MSH2 (MSH2), found in Saccharomyces cerevisiae (strain ATCC 204508 / S288c) (Baker's yeast).